A 521-amino-acid polypeptide reads, in one-letter code: Bifunctional dihydrofolate reductase-thymidylate synthase (521 aa).

A DHFR domain is found at 22–232; it reads AFSLVVAVDE…TKYYFEKLIP (211 aa). V26 is a substrate binding site. Residues A28 and 34–40 each bind NADP(+); that span reads GIGDGRS. D48 serves as a coordination point for substrate. NADP(+) is bound by residues 78-80 and 99-102; these read RKT and LSST. Substrate contacts are provided by I154, Y160, and T178. 155-162 lines the NADP(+) pocket; sequence GGGSVYAE. The tract at residues 237-521 is thymidylate synthase; the sequence is EEQYLSLVDR…YPPISMKMAV (285 aa). R257 provides a ligand contact to dUMP. C403 is a catalytic residue. Residues H404, 422 to 426, N434, and 464 to 466 each bind dUMP; these read QRSCD and HVY.

The protein in the N-terminal section; belongs to the dihydrofolate reductase family. It in the C-terminal section; belongs to the thymidylate synthase family. As to quaternary structure, homodimer.

It carries out the reaction (6S)-5,6,7,8-tetrahydrofolate + NADP(+) = 7,8-dihydrofolate + NADPH + H(+). The catalysed reaction is dUMP + (6R)-5,10-methylene-5,6,7,8-tetrahydrofolate = 7,8-dihydrofolate + dTMP. It functions in the pathway cofactor biosynthesis; tetrahydrofolate biosynthesis; 5,6,7,8-tetrahydrofolate from 7,8-dihydrofolate: step 1/1. In terms of biological role, bifunctional enzyme. Involved in de novo dTMP biosynthesis. Key enzyme in folate metabolism. Catalyzes an essential reaction for de novo glycine and purine synthesis, DNA precursor synthesis, and for the conversion of dUMP to dTMP. In Trypanosoma cruzi, this protein is Bifunctional dihydrofolate reductase-thymidylate synthase.